A 116-amino-acid chain; its full sequence is uncharacterized protein (116 aa).

The Extracellular segment spans residues 1-46; it reads MGDNTTVAPGTNQTLVEEDLGAQITHTLMVQIMSKLNEMLTEYQPQ. Asn-4 and Asn-12 each carry an N-linked (GlcNAc...) asparagine; by host glycan. The helical transmembrane segment at 47–67 threads the bilayer; that stretch reads IIGIGATVLAIFVIMFISLLI. Residues 68 to 116 lie on the Cytoplasmic side of the membrane; it reads ILGCNCIRPYNFKNLKRYITGKASKSVEYQPLKMSAVNMGMDEDDEFLA.

The protein localises to the host membrane. This is an uncharacterized protein from Magallana gigas (Pacific oyster).